A 1527-amino-acid polypeptide reads, in one-letter code: Lysophospholipase nte1 (1527 aa).

The Cytoplasmic portion of the chain corresponds to 1 to 73 (MADSGASVPS…SPPTPTTMVG (73 aa)). A helical membrane pass occupies residues 74–94 (WIGWVFSLVFQTIPSVLYWVI). The Lumenal segment spans residues 95-116 (TFSTITLPTWLFTLFSMSLTFT). Residues 117 to 137 (MNFTTLLLIVLGLVSTVSWFI) traverse the membrane as a helical segment. Over 138-1527 (RYRFLNMYSR…RTLAPRRASI (1390 aa)) the chain is Cytoplasmic. Residues 299–310 (GSSSSMSSVQPS) show a composition bias toward low complexity. Disordered stretches follow at residues 299-387 (GSSS…RRKS), 567-596 (DQFA…QRKD), and 765-785 (ATSR…KKPS). Over residues 364-377 (RASSYHPNGQSTAS) the composition is skewed to polar residues. Residues 682–809 (GGTS…SYRS) and 846–966 (RLTG…IAQR) each bind a nucleoside 3',5'-cyclic phosphate. One can recognise a PNPLA domain in the interval 1224 to 1388 (LVLGGGGARG…IDNLTVAHMK (165 aa)). The GXGXXG motif lies at 1228–1233 (GGGARG). The GXSXG motif lies at 1255–1259 (GTSIG). Residue serine 1257 is the Nucleophile of the active site. Aspartate 1375 (proton acceptor) is an active-site residue. The short motif at 1375 to 1377 (DGG) is the DGA/G element. Residues 1504 to 1527 (LPLPEENEEKKKLQRTLAPRRASI) are disordered.

This sequence belongs to the NTE family.

It is found in the endoplasmic reticulum membrane. It catalyses the reaction a 1-acyl-sn-glycero-3-phosphocholine + H2O = sn-glycerol 3-phosphocholine + a fatty acid + H(+). With respect to regulation, inhibited by organophosphorus esters. In terms of biological role, intracellular phospholipase B that catalyzes the double deacylation of phosphatidylcholine (PC) to glycerophosphocholine (GroPCho). Plays an important role in membrane lipid homeostasis. Responsible for the rapid PC turnover in response to inositol, elevated temperatures, or when choline is present in the growth medium. In Emericella nidulans (strain FGSC A4 / ATCC 38163 / CBS 112.46 / NRRL 194 / M139) (Aspergillus nidulans), this protein is Lysophospholipase nte1 (nte1).